The chain runs to 315 residues: DNA-directed RNA polymerase subunit alpha (315 aa).

The alpha N-terminal domain (alpha-NTD) stretch occupies residues 1-228 (MLEIEKPKIE…EHFKLFMTLT (228 aa)). The segment at 245–315 (KEKVLEMTIE…LGLGLKKSDE (71 aa)) is alpha C-terminal domain (alpha-CTD).

The protein belongs to the RNA polymerase alpha chain family. In terms of assembly, homodimer. The RNAP catalytic core consists of 2 alpha, 1 beta, 1 beta' and 1 omega subunit. When a sigma factor is associated with the core the holoenzyme is formed, which can initiate transcription.

The catalysed reaction is RNA(n) + a ribonucleoside 5'-triphosphate = RNA(n+1) + diphosphate. In terms of biological role, DNA-dependent RNA polymerase catalyzes the transcription of DNA into RNA using the four ribonucleoside triphosphates as substrates. This Clostridium novyi (strain NT) protein is DNA-directed RNA polymerase subunit alpha.